The sequence spans 332 residues: dTDP-3,4-didehydro-2,6-dideoxy-alpha-D-glucose 3-reductase (332 aa).

17 to 23 (CADIAWR) contacts NADP(+). Arg-24 is a binding site for substrate. NADP(+) contacts are provided by residues 42–43 (SR), Tyr-63, Leu-79, and His-84. The active-site Proton donor is the Lys-102. Residues Arg-170 and Asp-182 each contribute to the NADP(+) site. Residues Tyr-240 and Thr-260 each coordinate substrate.

Belongs to the Gfo/Idh/MocA family. Homotetramer; dimer of dimers.

The enzyme catalyses dTDP-4-dehydro-2,6-dideoxy-alpha-D-glucose + NADP(+) = dTDP-3,4-didehydro-2,6-dideoxy-alpha-D-glucose + NADPH + H(+). It participates in antibiotic biosynthesis. In terms of biological role, involved in the biosynthesis of L-digitoxose, an unusual dideoxysugar attached to various pharmacologically active natural products, including the antitumor antibiotic tetrocarcin A, and the antibiotics kijanimicin and jadomycin B. Catalyzes the reduction of the C-3 keto moiety of dTDP-3,4-diketo-2,6-dideoxy-alpha-D-glucose to yield dTDP-4-keto-2,6-dideoxy-alpha-D-glucose. Also able to reduce dTDP-3-keto-6-deoxy-D-galactose and dTDP-3-keto-6-deoxy-D-glucose to yield dTDP-fucose and dTDP-quinovose, respectively. The chain is dTDP-3,4-didehydro-2,6-dideoxy-alpha-D-glucose 3-reductase from Actinomadura kijaniata.